A 360-amino-acid polypeptide reads, in one-letter code: MKDSIIAKLESLKERYEELEALLGDVSVISDQDKFRAYSKEYSQLEEVVKCFNRWTQLNQNIEEAEILLDDPEMKEMAQMEIEESKAEIEEVEQQLQILLLPKDPNDEYNCYLEIRAGTGGDEAGIFAGDLFRMYSRYAESKRWCVEMLSANESEQGGYKEVIVKVSGEGVYGQLKFESGGHRVQRVPKTESQGRIHTSACTVAVMPELPESEMPEINPADLRIDTYRSSGAGGQHVNTTDSAVRITHIPTGIVVECQDERSQHKNKAKAMSVLASRIVQAEQERQAAEQTDMRRNLLGSGDRSDKIRTYNYPQGRVTDHRINLTIYRLDEVMNGKIDELIQPIITEYQADQLAALSEQN.

An N5-methylglutamine modification is found at Gln-235. Residues 285-295 are compositionally biased toward basic and acidic residues; that stretch reads RQAAEQTDMRR. A disordered region spans residues 285-309; sequence RQAAEQTDMRRNLLGSGDRSDKIRT.

It belongs to the prokaryotic/mitochondrial release factor family. In terms of processing, methylated by PrmC. Methylation increases the termination efficiency of RF1.

It is found in the cytoplasm. Its function is as follows. Peptide chain release factor 1 directs the termination of translation in response to the peptide chain termination codons UAG and UAA. The chain is Peptide chain release factor 1 from Haemophilus influenzae (strain 86-028NP).